A 342-amino-acid polypeptide reads, in one-letter code: N-acetyl-gamma-glutamyl-phosphate reductase (342 aa).

Cys146 is an active-site residue.

This sequence belongs to the NAGSA dehydrogenase family. Type 1 subfamily.

It is found in the cytoplasm. It catalyses the reaction N-acetyl-L-glutamate 5-semialdehyde + phosphate + NADP(+) = N-acetyl-L-glutamyl 5-phosphate + NADPH + H(+). Its pathway is amino-acid biosynthesis; L-arginine biosynthesis; N(2)-acetyl-L-ornithine from L-glutamate: step 3/4. Functionally, catalyzes the NADPH-dependent reduction of N-acetyl-5-glutamyl phosphate to yield N-acetyl-L-glutamate 5-semialdehyde. This chain is N-acetyl-gamma-glutamyl-phosphate reductase, found in Thermobifida fusca (strain YX).